The primary structure comprises 312 residues: DNA-directed RNA polymerase subunit alpha (312 aa).

An alpha N-terminal domain (alpha-NTD) region spans residues 1–226 (MIEFEKPKIT…DHLNLFVDLS (226 aa)). Residues 243–312 (TERVLDKIIE…ELGLSLKKRK (70 aa)) form an alpha C-terminal domain (alpha-CTD) region.

This sequence belongs to the RNA polymerase alpha chain family. In terms of assembly, homodimer. The RNAP catalytic core consists of 2 alpha, 1 beta, 1 beta' and 1 omega subunit. When a sigma factor is associated with the core the holoenzyme is formed, which can initiate transcription.

It catalyses the reaction RNA(n) + a ribonucleoside 5'-triphosphate = RNA(n+1) + diphosphate. Its function is as follows. DNA-dependent RNA polymerase catalyzes the transcription of DNA into RNA using the four ribonucleoside triphosphates as substrates. The protein is DNA-directed RNA polymerase subunit alpha of Lactococcus lactis subsp. lactis (strain IL1403) (Streptococcus lactis).